Here is a 244-residue protein sequence, read N- to C-terminus: Capsid protein (244 aa).

Positions 1–24 match the Bipartite nuclear localization signal motif; that stretch reads MSTSKRKRADEAQWNKRSTKKKGS. Positions 1–39 are disordered; the sequence is MSTSKRKRADEAQWNKRSTKKKGSAPQAKKPGGKGERPS.

This sequence belongs to the geminiviridae capsid protein family. As to quaternary structure, homomultimer. Interacts with the movement protein. Binds to single-stranded and double-stranded viral DNA.

The protein resides in the virion. It localises to the host nucleus. In terms of biological role, encapsidates the viral genome into characteristic twinned ('geminate') particles. Binds the genomic viral ssDNA and shuttles it into and out of the cell nucleus. Plays a role in protection of the genome from degradation, virus acquisition and transmission by insect vectors, infectivity, and systemic movement. The CP of monopartite geminiviruses is absolutely essential for virus movement. The chain is Capsid protein from Avena sativa (Oat).